A 124-amino-acid chain; its full sequence is Small ribosomal subunit protein uS12 (124 aa).

Residues methionine 1–proline 28 are disordered. Positions arginine 9 to lysine 18 are enriched in basic residues. The residue at position 89 (aspartate 89) is a 3-methylthioaspartic acid.

This sequence belongs to the universal ribosomal protein uS12 family. As to quaternary structure, part of the 30S ribosomal subunit. Contacts proteins S8 and S17. May interact with IF1 in the 30S initiation complex.

In terms of biological role, with S4 and S5 plays an important role in translational accuracy. Its function is as follows. Interacts with and stabilizes bases of the 16S rRNA that are involved in tRNA selection in the A site and with the mRNA backbone. Located at the interface of the 30S and 50S subunits, it traverses the body of the 30S subunit contacting proteins on the other side and probably holding the rRNA structure together. The combined cluster of proteins S8, S12 and S17 appears to hold together the shoulder and platform of the 30S subunit. The sequence is that of Small ribosomal subunit protein uS12 from Paenarthrobacter aurescens (strain TC1).